The chain runs to 44 residues: Photosystem I reaction center subunit IX (44 aa).

A helical membrane pass occupies residues 7–27 (YLSVAPVISTLWFGSLAGLLI).

Belongs to the PsaJ family.

It localises to the plastid. It is found in the chloroplast thylakoid membrane. May help in the organization of the PsaE and PsaF subunits. This Populus alba (White poplar) protein is Photosystem I reaction center subunit IX.